A 470-amino-acid chain; its full sequence is Serine hydroxymethyltransferase 5 (470 aa).

Residue Lys244 is modified to N6-(pyridoxal phosphate)lysine.

It belongs to the SHMT family. In terms of assembly, homotetramer. It depends on pyridoxal 5'-phosphate as a cofactor.

Its subcellular location is the cytoplasm. The enzyme catalyses (6R)-5,10-methylene-5,6,7,8-tetrahydrofolate + glycine + H2O = (6S)-5,6,7,8-tetrahydrofolate + L-serine. It participates in one-carbon metabolism; tetrahydrofolate interconversion. Catalyzes the interconversion of serine and glycine. This Arabidopsis thaliana (Mouse-ear cress) protein is Serine hydroxymethyltransferase 5 (SHM5).